A 301-amino-acid chain; its full sequence is MNFAAALRWWRLSLPIADELEESLIWKLTDLGLCRLAVQHAPENSERTLLAWLPSSEWSESDRDQLMANLRPLAEPFGLKLANPTWCEVADEDWSLNWKQDWQPDPVGQRLLILPAWLDLPQEYADRFVVRLDPGSAFGTGSHPSTRLCLEALERNPPLGLRVADLGCGSGVLGFAALAFGARQVLAADTDCQAVCASRANTELNQLDLDRLRVVHGSVEALSAQLEGQTVDLLLCNILAPVIEVLAPSFDQLLSANGRGLLSGLLVKQAPRLQMVLEALGWRVNCLTEQGCWGLLDVSKR.

Residues threonine 146, glycine 167, aspartate 189, and asparagine 237 each contribute to the S-adenosyl-L-methionine site.

It belongs to the methyltransferase superfamily. PrmA family.

Its subcellular location is the cytoplasm. The catalysed reaction is L-lysyl-[protein] + 3 S-adenosyl-L-methionine = N(6),N(6),N(6)-trimethyl-L-lysyl-[protein] + 3 S-adenosyl-L-homocysteine + 3 H(+). Its function is as follows. Methylates ribosomal protein L11. This is Ribosomal protein L11 methyltransferase from Prochlorococcus marinus (strain MIT 9313).